A 284-amino-acid chain; its full sequence is MSAQLINGKEVSQKRLQAVAEAVAQRQQNNLHHPCLAVVLVGGDPASAVYVRNKKTACQKCGIKSLSYELPESTSQEELLALVDRLNADSEVDGILVQLPLPKHLDSQAVLERISPDKDVDGFHPYNVGRLAVKMPLMRPCTPKGVMTLLEAYGIDPKGKKAVVVGASNIVGRPQALELLLARATVTVCHSATENLTDEVAGADILVVGVGIPNFVKGEWIKPGAVVIDVGINRLDDGSLCGDVEFETAKERAAMITPVPGGVGPMTIATLMENTLHAASLHDA.

Residues 166–168 (GAS), Ser191, and Ile232 contribute to the NADP(+) site.

This sequence belongs to the tetrahydrofolate dehydrogenase/cyclohydrolase family. In terms of assembly, homodimer.

The catalysed reaction is (6R)-5,10-methylene-5,6,7,8-tetrahydrofolate + NADP(+) = (6R)-5,10-methenyltetrahydrofolate + NADPH. It catalyses the reaction (6R)-5,10-methenyltetrahydrofolate + H2O = (6R)-10-formyltetrahydrofolate + H(+). Its pathway is one-carbon metabolism; tetrahydrofolate interconversion. Its function is as follows. Catalyzes the oxidation of 5,10-methylenetetrahydrofolate to 5,10-methenyltetrahydrofolate and then the hydrolysis of 5,10-methenyltetrahydrofolate to 10-formyltetrahydrofolate. The polypeptide is Bifunctional protein FolD (Neisseria meningitidis serogroup B (strain ATCC BAA-335 / MC58)).